Here is a 209-residue protein sequence, read N- to C-terminus: Uracil phosphoribosyltransferase (209 aa).

5-phospho-alpha-D-ribose 1-diphosphate is bound by residues R79, R104, and 131–139 (DPMLATGGS). Uracil contacts are provided by residues I194 and 199 to 201 (GDA). D200 is a 5-phospho-alpha-D-ribose 1-diphosphate binding site.

Belongs to the UPRTase family. The cofactor is Mg(2+).

The enzyme catalyses UMP + diphosphate = 5-phospho-alpha-D-ribose 1-diphosphate + uracil. It participates in pyrimidine metabolism; UMP biosynthesis via salvage pathway; UMP from uracil: step 1/1. With respect to regulation, allosterically activated by GTP. Its function is as follows. Catalyzes the conversion of uracil and 5-phospho-alpha-D-ribose 1-diphosphate (PRPP) to UMP and diphosphate. In Streptococcus salivarius, this protein is Uracil phosphoribosyltransferase.